Here is a 335-residue protein sequence, read N- to C-terminus: DNA-directed RNA polymerase subunit alpha (335 aa).

Positions 1 to 233 are alpha N-terminal domain (alpha-NTD); sequence MTAVNDFLTP…QQIAVFVDLE (233 aa). Positions 247–335 are alpha C-terminal domain (alpha-CTD); the sequence is IDPILLRPVD…DDDRLNAKLR (89 aa).

It belongs to the RNA polymerase alpha chain family. Homodimer. The RNAP catalytic core consists of 2 alpha, 1 beta, 1 beta' and 1 omega subunit. When a sigma factor is associated with the core the holoenzyme is formed, which can initiate transcription.

It catalyses the reaction RNA(n) + a ribonucleoside 5'-triphosphate = RNA(n+1) + diphosphate. Functionally, DNA-dependent RNA polymerase catalyzes the transcription of DNA into RNA using the four ribonucleoside triphosphates as substrates. This Alcanivorax borkumensis (strain ATCC 700651 / DSM 11573 / NCIMB 13689 / SK2) protein is DNA-directed RNA polymerase subunit alpha.